The chain runs to 111 residues: Cell division protein FtsB (111 aa).

At 1 to 3 (MGK) the chain is on the cytoplasmic side. A helical membrane pass occupies residues 4–21 (LTLLLLILLGWLQYSLWL). The Periplasmic portion of the chain corresponds to 22 to 111 (GKNGIHDYVR…TNTSSNNTQR (90 aa)). Residues 33–63 (KDDVVVQQGNNAKLKDRNEQLFAEIDDLNGG) are a coiled coil. The disordered stretch occupies residues 88-111 (VPESNHRNANTPSSTNTSSNNTQR). The segment covering 97–111 (NTPSSTNTSSNNTQR) has biased composition (low complexity).

The protein belongs to the FtsB family. In terms of assembly, part of a complex composed of FtsB, FtsL and FtsQ.

It is found in the cell inner membrane. Its function is as follows. Essential cell division protein. May link together the upstream cell division proteins, which are predominantly cytoplasmic, with the downstream cell division proteins, which are predominantly periplasmic. This Pectobacterium atrosepticum (strain SCRI 1043 / ATCC BAA-672) (Erwinia carotovora subsp. atroseptica) protein is Cell division protein FtsB.